Here is a 425-residue protein sequence, read N- to C-terminus: Histidine--tRNA ligase (425 aa).

This sequence belongs to the class-II aminoacyl-tRNA synthetase family. In terms of assembly, homodimer.

It localises to the cytoplasm. The catalysed reaction is tRNA(His) + L-histidine + ATP = L-histidyl-tRNA(His) + AMP + diphosphate + H(+). The chain is Histidine--tRNA ligase from Listeria monocytogenes serovar 1/2a (strain ATCC BAA-679 / EGD-e).